Consider the following 611-residue polypeptide: Phosphoenolpyruvate carboxykinase [GTP] (611 aa).

Substrate is bound by residues R82 and Y222 to G224. Residues K231 and H251 each coordinate Mn(2+). Residue S273 participates in substrate binding. A274–N279 serves as a coordination point for GTP. The active site involves C275. D298 is a Mn(2+) binding site. Residue N389–R391 coordinates substrate. Residues R391, R422, and F517 to N520 contribute to the GTP site.

It belongs to the phosphoenolpyruvate carboxykinase [GTP] family. In terms of assembly, monomer. The cofactor is Mn(2+).

The protein resides in the cytoplasm. It catalyses the reaction oxaloacetate + GTP = phosphoenolpyruvate + GDP + CO2. It functions in the pathway carbohydrate biosynthesis; gluconeogenesis. Catalyzes the conversion of oxaloacetate (OAA) to phosphoenolpyruvate (PEP), the rate-limiting step in the metabolic pathway that produces glucose from lactate and other precursors derived from the citric acid cycle. The sequence is that of Phosphoenolpyruvate carboxykinase [GTP] from Arthrobacter sp. (strain FB24).